Here is a 406-residue protein sequence, read N- to C-terminus: Putative gustatory receptor 59f (406 aa).

The Cytoplasmic portion of the chain corresponds to 1 to 36 (MRSSATKGAKLKNSPRERLSSFNPQYAERYKELYRT). Residues 37-57 (LFWLLLISVLANTAPITILPG) form a helical membrane-spanning segment. At 58-69 (CPNRFYRLVHLS) the chain is on the extracellular side. Residues 70–90 (WMILWYGLFVLGSYWEFVLVT) form a helical membrane-spanning segment. Topologically, residues 91 to 99 (TQRVSLDRY) are cytoplasmic. Residues 100–120 (LNAIESAIYVVHIFSIMLLTW) form a helical membrane-spanning segment. The Extracellular portion of the chain corresponds to 121–154 (QCRNWAPKLMTNIVTSDLNRAYTIDCNRTKRFIR). A glycan (N-linked (GlcNAc...) asparagine) is linked at N147. A helical transmembrane segment spans residues 155–175 (LQLFLVGIFACLAIFFNIWTH). The Cytoplasmic segment spans residues 176–189 (KFVVYRSILSINSY). The chain crosses the membrane as a helical span at residues 190–210 (VMPNIISSISFAQYYLLLQGI). The Extracellular segment spans residues 211 to 259 (AWRQRRLTEGLERELTHLHSPRISEVQKIRMHHANLIDFTKAVNRTFQY). N-linked (GlcNAc...) asparagine glycosylation is present at N254. The chain crosses the membrane as a helical span at residues 260-280 (SILLLFVGCFLNFNLVLFLVY). Residues 281 to 364 (QGIENPSMAD…RQHVVCGVIN (84 aa)) are Cytoplasmic-facing. A helical membrane pass occupies residues 365–385 (LDLKFLTTLLVASADFFIFLL). At 386-406 (QYDVTYEALSKSVQGNVTRYK) the chain is on the extracellular side. The N-linked (GlcNAc...) asparagine glycan is linked to N401.

It belongs to the insect chemoreceptor superfamily. Gustatory receptor (GR) family. Gr10a subfamily. In terms of tissue distribution, expressed in the adult abdomen and wing. In larvae, is expressed in neurons of the terminal external chemosensory organ.

The protein resides in the cell membrane. Probable gustatory receptor which mediates acceptance or avoidance behavior, depending on its substrates. The protein is Putative gustatory receptor 59f (Gr59f) of Drosophila melanogaster (Fruit fly).